A 190-amino-acid chain; its full sequence is Imidazole glycerol phosphate synthase subunit HisH (190 aa).

A Glutamine amidotransferase type-1 domain is found at I2–R190. C73 functions as the Nucleophile in the catalytic mechanism. Active-site residues include H169 and E171.

As to quaternary structure, heterodimer of HisH and HisF.

The protein localises to the cytoplasm. The catalysed reaction is 5-[(5-phospho-1-deoxy-D-ribulos-1-ylimino)methylamino]-1-(5-phospho-beta-D-ribosyl)imidazole-4-carboxamide + L-glutamine = D-erythro-1-(imidazol-4-yl)glycerol 3-phosphate + 5-amino-1-(5-phospho-beta-D-ribosyl)imidazole-4-carboxamide + L-glutamate + H(+). It carries out the reaction L-glutamine + H2O = L-glutamate + NH4(+). The protein operates within amino-acid biosynthesis; L-histidine biosynthesis; L-histidine from 5-phospho-alpha-D-ribose 1-diphosphate: step 5/9. Its function is as follows. IGPS catalyzes the conversion of PRFAR and glutamine to IGP, AICAR and glutamate. The HisH subunit catalyzes the hydrolysis of glutamine to glutamate and ammonia as part of the synthesis of IGP and AICAR. The resulting ammonia molecule is channeled to the active site of HisF. The sequence is that of Imidazole glycerol phosphate synthase subunit HisH from Pyrobaculum aerophilum (strain ATCC 51768 / DSM 7523 / JCM 9630 / CIP 104966 / NBRC 100827 / IM2).